Reading from the N-terminus, the 92-residue chain is MAKRTKKVGIVGKYGTRYGASLRKMVKKIEISQHAKYTCSFCGKTKMKRRAVGIWHCGSCMKTVAGGAWTYNTTSAVTVKSAIKRLKEMKDQ.

Residues C39, C42, C57, and C60 each coordinate Zn(2+). Residues C39–C60 form a C4-type zinc finger.

It belongs to the eukaryotic ribosomal protein eL43 family. In terms of assembly, component of the large ribosomal subunit.

It is found in the cytoplasm. In terms of biological role, component of the large ribosomal subunit. The ribosome is a large ribonucleoprotein complex responsible for the synthesis of proteins in the cell. The sequence is that of Large ribosomal subunit protein eL43 (rpl37a) from Ictalurus punctatus (Channel catfish).